Consider the following 198-residue polypeptide: Recombination protein RecR (198 aa).

The C4-type zinc finger occupies 57–72; sequence CEKCNTFTEAQICEVC. A Toprim domain is found at 80–175; it reads TLLCVVETPA…AVTRLARGVP (96 aa).

This sequence belongs to the RecR family.

In terms of biological role, may play a role in DNA repair. It seems to be involved in an RecBC-independent recombinational process of DNA repair. It may act with RecF and RecO. In Paraburkholderia xenovorans (strain LB400), this protein is Recombination protein RecR.